The following is a 603-amino-acid chain: Phosphomethylpyrimidine synthase (603 aa).

Substrate is bound by residues Asn-224, Met-253, Tyr-282, His-318, 338–340 (SRG), 379–382 (DGLR), and Glu-418. Position 422 (His-422) interacts with Zn(2+). Position 445 (Tyr-445) interacts with substrate. His-486 is a binding site for Zn(2+). 3 residues coordinate [4Fe-4S] cluster: Cys-566, Cys-569, and Cys-574.

The protein belongs to the ThiC family. Homodimer. It depends on [4Fe-4S] cluster as a cofactor.

It catalyses the reaction 5-amino-1-(5-phospho-beta-D-ribosyl)imidazole + S-adenosyl-L-methionine = 4-amino-2-methyl-5-(phosphooxymethyl)pyrimidine + CO + 5'-deoxyadenosine + formate + L-methionine + 3 H(+). It participates in cofactor biosynthesis; thiamine diphosphate biosynthesis. Its function is as follows. Catalyzes the synthesis of the hydroxymethylpyrimidine phosphate (HMP-P) moiety of thiamine from aminoimidazole ribotide (AIR) in a radical S-adenosyl-L-methionine (SAM)-dependent reaction. In Xylella fastidiosa (strain Temecula1 / ATCC 700964), this protein is Phosphomethylpyrimidine synthase.